Reading from the N-terminus, the 631-residue chain is Hepatocyte nuclear factor 1-alpha (631 aa).

The dimerization stretch occupies residues 1–31; the sequence is MVSKLSQLQTELLAALLESGLSKEALIQALG. An HNF-p1 domain is found at 1-32; sequence MVSKLSQLQTELLAALLESGLSKEALIQALGE. The interval 40 to 81 is disordered; it reads GEGPLDKGESCGGGRGELAELPNGLGETRGSEDETDDDGEDF. S70 is modified (phosphoserine). T74 is modified (phosphothreonine). A POU-specific atypical domain is found at 87–182; that stretch reads KELENLSPEE…VAQQFTHAGQ (96 aa). Position 93 is a phosphoserine (S93). Residue K117 forms a Glycyl lysine isopeptide (Lys-Gly) (interchain with G-Cter in ubiquitin) linkage. Interaction with DNA stretches follow at residues 130–132, 143–149, 155–158, and 203–206; these read QRE, HLSQHLN, KTQK, and RFKW. Residues 183 to 205 form a disordered region; it reads GGLIEEPTGDELPTKKGRRNRFK. Residues 197 to 205 carry the Nuclear localization signal motif; the sequence is KKGRRNRFK. The segment at residues 199–279 is a DNA-binding region (homeobox; HNF1-type); that stretch reads GRRNRFKWGP…NRRKEEAFRH (81 aa). A Phosphoserine modification is found at S247. Interaction with DNA stretches follow at residues 263 to 265 and 270 to 273; these read RVY and NRRK. 2 disordered regions span residues 283–358 and 545–567; these read MDTY…GLEP and SDTEASSESGLHTPASQATTLHV. The span at 288 to 298 shows a compositional bias: pro residues; it reads GPPPGPGPGPA. A Phosphoserine modification is found at S313. The segment covering 325 to 353 has biased composition (polar residues); sequence PATSETAEVPSSSGGPLVTVSTPLHQVSP.

This sequence belongs to the HNF1 homeobox family. In terms of assembly, binds DNA as a dimer. Heterotetramer with PCBD1; formed by a dimer of dimers. Interacts with PCBD1. Interacts with BHLHE41. Interacts with NR5A2. Interacts with SPOP; this interaction promotes ubiquitination and degradation of HNF1A. Ubiquitinated in s SPOP-dependent manner; leading to prteasomal degradation. Liver.

The protein localises to the nucleus. In terms of biological role, transcriptional activator that regulates the tissue specific expression of multiple genes, especially in pancreatic islet cells and in liver. Binds to the inverted palindrome 5'-GTTAATNATTAAC-3'. Activates the transcription of CYP1A2, CYP2E1 and CYP3A11. (Microbial infection) Plays a crucial role for hepatitis B virus gene transcription and DNA replication. Mechanistically, synergistically cooperates with NR5A2 to up-regulate the activity of one of the critical cis-elements in the hepatitis B virus genome enhancer II (ENII). The chain is Hepatocyte nuclear factor 1-alpha (HNF1A) from Homo sapiens (Human).